Here is a 282-residue protein sequence, read N- to C-terminus: Pantothenate synthetase (282 aa).

30-37 (MGYLHEGH) is a binding site for ATP. H37 serves as the catalytic Proton donor. Residue Q61 participates in (R)-pantoate binding. Q61 is a beta-alanine binding site. 148–151 (GQKD) contacts ATP. Q154 is a (R)-pantoate binding site. Residues V177 and 185–188 (MSSR) contribute to the ATP site.

It belongs to the pantothenate synthetase family. In terms of assembly, homodimer.

The protein resides in the cytoplasm. It carries out the reaction (R)-pantoate + beta-alanine + ATP = (R)-pantothenate + AMP + diphosphate + H(+). It participates in cofactor biosynthesis; (R)-pantothenate biosynthesis; (R)-pantothenate from (R)-pantoate and beta-alanine: step 1/1. Its function is as follows. Catalyzes the condensation of pantoate with beta-alanine in an ATP-dependent reaction via a pantoyl-adenylate intermediate. The protein is Pantothenate synthetase of Syntrophomonas wolfei subsp. wolfei (strain DSM 2245B / Goettingen).